Consider the following 167-residue polypeptide: N-alpha-acetyltransferase (167 aa).

The N-acetyltransferase domain occupies 12 to 167 (YRIRNARLTD…EDAYLMAAPL (156 aa)). A substrate-binding site is contributed by Tyr37. His88 provides a ligand contact to Zn(2+). Residues 92-94 (IAV) and 100-105 (RLGIGT) contribute to the acetyl-CoA site. Glu127 is a Zn(2+) binding site. Residues Asn132 and 139–141 (YKK) each bind acetyl-CoA. Substrate is bound at residue Tyr154.

This sequence belongs to the acetyltransferase family. ARD1 subfamily. In terms of assembly, homodimer.

It localises to the cytoplasm. The enzyme catalyses N-terminal L-alanyl-[protein] + acetyl-CoA = N-terminal N(alpha)-acetyl-L-alanyl-[protein] + CoA + H(+). The catalysed reaction is N-terminal L-seryl-[protein] + acetyl-CoA = N-terminal N(alpha)-acetyl-L-seryl-[protein] + CoA + H(+). It catalyses the reaction N-terminal L-methionyl-L-leucyl-[protein] + acetyl-CoA = N-terminal N(alpha)-acetyl-L-methionyl-L-leucyl-[protein] + CoA + H(+). It carries out the reaction N-terminal L-methionyl-L-glutamyl-[protein] + acetyl-CoA = N-terminal N(alpha)-acetyl-L-methionyl-L-glutamyl-[protein] + CoA + H(+). Its function is as follows. Displays alpha (N-terminal) acetyltransferase activity. Catalyzes the covalent attachment of an acetyl moiety from acetyl-CoA to the free alpha-amino group at the N-terminus of a protein. The sequence is that of N-alpha-acetyltransferase from Sulfurisphaera tokodaii (strain DSM 16993 / JCM 10545 / NBRC 100140 / 7) (Sulfolobus tokodaii).